A 392-amino-acid polypeptide reads, in one-letter code: N-acetylneuraminate epimerase (392 aa).

The N-terminal stretch at Met-1–Ala-35 is a signal peptide. 7 Kelch repeats span residues Ser-56–Ala-100, Lys-102–Asp-155, Ser-157–Asn-192, Ala-193–Asp-238, Leu-241–Ala-290, Lys-312–Asp-361, and Val-363–Glu-392. Glu-247 serves as the catalytic Proton acceptor.

The protein belongs to the NanM family. As to quaternary structure, homodimer.

The protein resides in the periplasm. The enzyme catalyses N-acetyl-alpha-neuraminate = N-acetyl-beta-neuraminate. Functionally, converts alpha-N-acetylneuranimic acid (Neu5Ac) to the beta-anomer, accelerating the equilibrium between the alpha- and beta-anomers. Probably facilitates sialidase-negative bacteria to compete successfully for limited amounts of extracellular Neu5Ac, which is likely taken up in the beta-anomer. In addition, the rapid removal of sialic acid from solution might be advantageous to the bacterium to damp down host responses. This is N-acetylneuraminate epimerase from Yersinia pseudotuberculosis serotype O:1b (strain IP 31758).